Here is a 320-residue protein sequence, read N- to C-terminus: o-succinylbenzoate synthase (320 aa).

Lysine 133 functions as the Proton donor in the catalytic mechanism. Mg(2+) is bound by residues aspartate 161, glutamate 190, and aspartate 213. Lysine 235 (proton acceptor) is an active-site residue.

The protein belongs to the mandelate racemase/muconate lactonizing enzyme family. MenC type 1 subfamily. The cofactor is a divalent metal cation.

It carries out the reaction (1R,6R)-6-hydroxy-2-succinyl-cyclohexa-2,4-diene-1-carboxylate = 2-succinylbenzoate + H2O. It participates in quinol/quinone metabolism; 1,4-dihydroxy-2-naphthoate biosynthesis; 1,4-dihydroxy-2-naphthoate from chorismate: step 4/7. It functions in the pathway quinol/quinone metabolism; menaquinone biosynthesis. Converts 2-succinyl-6-hydroxy-2,4-cyclohexadiene-1-carboxylate (SHCHC) to 2-succinylbenzoate (OSB). This is o-succinylbenzoate synthase from Salmonella paratyphi A (strain ATCC 9150 / SARB42).